Consider the following 116-residue polypeptide: Iron-sulfur cluster insertion protein ErpA (116 aa).

Positions 44, 108, and 110 each coordinate iron-sulfur cluster.

Belongs to the HesB/IscA family. As to quaternary structure, homodimer. Iron-sulfur cluster serves as cofactor.

In terms of biological role, required for insertion of 4Fe-4S clusters for at least IspG. This chain is Iron-sulfur cluster insertion protein ErpA, found in Shewanella pealeana (strain ATCC 700345 / ANG-SQ1).